Here is a 418-residue protein sequence, read N- to C-terminus: Glutamyl-tRNA reductase (418 aa).

Substrate contacts are provided by residues 49-52 (TCNR), serine 107, 112-114 (EPQ), and glutamine 118. Catalysis depends on cysteine 50, which acts as the Nucleophile. 187 to 192 (GAGETI) lines the NADP(+) pocket.

It belongs to the glutamyl-tRNA reductase family. As to quaternary structure, homodimer.

It catalyses the reaction (S)-4-amino-5-oxopentanoate + tRNA(Glu) + NADP(+) = L-glutamyl-tRNA(Glu) + NADPH + H(+). It participates in porphyrin-containing compound metabolism; protoporphyrin-IX biosynthesis; 5-aminolevulinate from L-glutamyl-tRNA(Glu): step 1/2. In terms of biological role, catalyzes the NADPH-dependent reduction of glutamyl-tRNA(Glu) to glutamate 1-semialdehyde (GSA). The protein is Glutamyl-tRNA reductase of Vibrio parahaemolyticus serotype O3:K6 (strain RIMD 2210633).